Reading from the N-terminus, the 211-residue chain is Small ribosomal subunit protein uS3 (211 aa).

Positions 38-106 (LRNFLKKRLY…EVYLNIQEVR (69 aa)) constitute a KH type-2 domain.

It belongs to the universal ribosomal protein uS3 family. As to quaternary structure, part of the 30S ribosomal subunit. Forms a tight complex with proteins S10 and S14.

Functionally, binds the lower part of the 30S subunit head. Binds mRNA in the 70S ribosome, positioning it for translation. This chain is Small ribosomal subunit protein uS3, found in Geobacter sp. (strain M21).